The chain runs to 377 residues: SH2/SH3 adapter protein NCK1 (377 aa).

Residue alanine 2 is modified to N-acetylalanine. The SH3 1 domain maps to 2–61 (AEEVVVVAKFDYVAQQEQELDIKKNERLWLLDDSKSWWRVRNSMNKTGFVPSNYVERKNS). Residues serine 85, serine 89, serine 91, and serine 96 each carry the phosphoserine modification. Tyrosine 105 carries the phosphotyrosine modification. Positions 106–165 (DLNMPAYVKFNYMAEREDELSLIKGTKVIVMEKCSDGWWRGSYNGQVGWFPSNYVTEEGD) constitute an SH3 2 domain. Residue serine 166 is modified to Phosphoserine. An SH3 3 domain is found at 190 to 252 (QVLHVVQALY…PKNYVTVMQN (63 aa)). In terms of domain architecture, SH2 spans 282-376 (WYYGKVTRHQ…GEKLYLVKHL (95 aa)).

Interacts (via SH2 domain and SH3 domain 2) with EGFR. Interacts with PAK1 and SOS1. Interacts (via SH3 domains) with PKN2. Associates with BLNK, PLCG1, VAV1 and NCK1 in a B-cell antigen receptor-dependent fashion. Interacts with SOCS7. This interaction is required for nuclear import. Part of a complex containing PPP1R15B, PP1 and NCK1. Interacts with RALGPS1. Interacts with CAV2 (tyrosine phosphorylated form). Interacts with ADAM15. Interacts with FASLG. Directly interacts with RASA1. Interacts with isoform 4 of MINK1. Interacts with FLT1 (tyrosine phosphorylated). Interacts with KDR (tyrosine phosphorylated). Interacts (via SH2 domain) with EPHB1; activates the JUN cascade to regulate cell adhesion. Interacts with EPHA2. Interacts (via SH2 domain) with PDGFRB (tyrosine phosphorylated). Interacts with the inactive form of EIF2AK2/PKR. Interacts with PTPN1. Interacts with INSR/insulin receptor (in response to insulin stimulation); This interaction may mediate PTPN1 recruitment leading to INSR dephosphorylation. Interacts with IRS1. Post-translationally, phosphorylated on Ser and Tyr residues. Phosphorylated in response to activation of EGFR and FcERI. Phosphorylated by activated PDGFRB.

The protein localises to the cytoplasm. Its subcellular location is the endoplasmic reticulum. It is found in the nucleus. Its function is as follows. Adapter protein which associates with tyrosine-phosphorylated growth factor receptors, such as KDR and PDGFRB, or their cellular substrates. Maintains low levels of EIF2S1 phosphorylation by promoting its dephosphorylation by PP1. Plays a role in the DNA damage response, not in the detection of the damage by ATM/ATR, but for efficient activation of downstream effectors, such as that of CHEK2. Plays a role in ELK1-dependent transcriptional activation in response to activated Ras signaling. Modulates the activation of EIF2AK2/PKR by dsRNA. May play a role in cell adhesion and migration through interaction with ephrin receptors. The chain is SH2/SH3 adapter protein NCK1 (NCK1) from Homo sapiens (Human).